The following is a 480-amino-acid chain: Acyl-lipid (8-3)-desaturase (480 aa).

The segment at 1 to 30 (MAPHSADTAGLVPSDELRLRTSNSKGPEQE) is disordered. Residues 33–107 (LKKYTLEDVS…LAKYCIGELV (75 aa)) form the Cytochrome b5 heme-binding domain. 2 residues coordinate heme: histidine 68 and histidine 90. 2 consecutive transmembrane segments (helical) span residues 151 to 171 (IHPHMILKSLFILGGYFASYY) and 173 to 193 (AFFWSSSVLVSLFFALWMGFF). A Histidine box-1 motif is present at residues 203 to 207 (HDGNH). The Histidine box-2 motif lies at 238–243 (HVVGHH). 3 helical membrane passes run 280 to 300 (IYLAVLYGTLALKSIFLDDFL), 322 to 342 (IFFQGKLLYAFYMFVLPSVYG), and 348 to 368 (TFLALYVASQLITGWMLAFLF). Residues 419-423 (QIEHH) carry the Histidine box-3 motif.

The protein belongs to the fatty acid desaturase type 1 family. Requires Fe(2+) as cofactor.

The protein localises to the membrane. The catalysed reaction is an (8Z,11Z,14Z)-icosatrienoyl-containing glycerolipid + 2 Fe(II)-[cytochrome b5] + O2 + 2 H(+) = (5Z,8Z,11Z,14Z)-eicosatetraenoyl-containing glycerolipid + 2 Fe(III)-[cytochrome b5] + 2 H2O. It catalyses the reaction an (8Z,11Z,14Z,17Z)-eicosatetraenoyl-containing glycerolipid + 2 Fe(II)-[cytochrome b5] + O2 + 2 H(+) = a (5Z,8Z,11Z,14Z,17Z)-eicosapentaenoyl-containing glycerolipid + 2 Fe(III)-[cytochrome b5] + 2 H2O. Its function is as follows. Fatty acid desaturase that introduces a cis double bond at the 5-position in 20-carbon polyunsaturated fatty acids incorporated in a glycerolipid that contain a Delta(8) double bond. This chain is Acyl-lipid (8-3)-desaturase, found in Physcomitrium patens (Spreading-leaved earth moss).